The chain runs to 1284 residues: Neuronal cell adhesion molecule (1284 aa).

An N-terminal signal peptide occupies residues 1–24 (MMKEKSISASKASLVFFLCQMISA). Topologically, residues 25–1143 (LDVPLDSKLL…ASRQVDIATQ (1119 aa)) are extracellular. Ig-like C2-type domains follow at residues 41 to 129 (PTIT…AAIS), 136 to 230 (PSRS…QPIS), 243 to 332 (PPVL…ISVT), 337 to 424 (PYWI…AFVN), 430 to 517 (PRIL…VQLE), and 521 to 608 (PTMI…AVLT). Intrachain disulfides connect Cys63–Cys118 and Cys162–Cys213. Asn78 carries N-linked (GlcNAc...) asparagine glycosylation. N-linked (GlcNAc...) asparagine glycosylation is found at Asn218 and Asn290. 2 cysteine pairs are disulfide-bonded: Cys268-Cys316 and Cys358-Cys408. Asn409, Asn483, Asn576, Asn581, Asn595, and Asn692 each carry an N-linked (GlcNAc...) asparagine glycan. Cystine bridges form between Cys452–Cys501 and Cys543–Cys592. Fibronectin type-III domains follow at residues 625 to 720 (PPLD…TKSA), 725 to 819 (NPSN…SGED), 824 to 926 (APGN…TPEG), 930 to 1026 (PPSF…IMDE), and 1040 to 1132 (QPLY…TGPA). The segment covering 707 to 731 (QPSEPSEQYLTKSANPDENPSNVQG) has biased composition (polar residues). The interval 707-732 (QPSEPSEQYLTKSANPDENPSNVQGI) is disordered. Asn778, Asn834, Asn885, Asn969, Asn985, Asn995, Asn1048, Asn1059, and Asn1091 each carry an N-linked (GlcNAc...) asparagine glycan. A helical transmembrane segment spans residues 1144-1166 (GWFIGLMCAVALLILILLIVCFI). The Cytoplasmic portion of the chain corresponds to 1167–1284 (RRNKGGKYPV…SPVNAMNSFV (118 aa)). Composition is skewed to basic and acidic residues over residues 1175 to 1195 (PVKEKEDAHADPEIQPMKEDD), 1202 to 1212 (RSLESDAEDHK), and 1221 to 1230 (PSDRTVKKED). The segment at 1175-1284 (PVKEKEDAHA…SPVNAMNSFV (110 aa)) is disordered. The segment covering 1268-1284 (NESSEAPSPVNAMNSFV) has biased composition (polar residues).

It belongs to the immunoglobulin superfamily. L1/neurofascin/NgCAM family. As to quaternary structure, heterodimer of an alpha and a beta chain. In terms of tissue distribution, retina and developing brain.

Its subcellular location is the cell membrane. Its function is as follows. This protein is a cell adhesion molecule involved in neuron-neuron adhesion, neurite fasciculation, outgrowth of neurites, etc. Specifically involved in the development of optic fibres in the retina. The sequence is that of Neuronal cell adhesion molecule from Gallus gallus (Chicken).